We begin with the raw amino-acid sequence, 137 residues long: Putative pre-16S rRNA nuclease (137 aa).

Belongs to the YqgF nuclease family.

Its subcellular location is the cytoplasm. In terms of biological role, could be a nuclease involved in processing of the 5'-end of pre-16S rRNA. The polypeptide is Putative pre-16S rRNA nuclease (Flavobacterium psychrophilum (strain ATCC 49511 / DSM 21280 / CIP 103535 / JIP02/86)).